The sequence spans 954 residues: Valine--tRNA ligase (954 aa).

The 'HIGH' region motif lies at 48–58; sequence PNVTGSLHMGH. The 'KMSKS' region signature appears at 560-564; it reads KMSKS. Lys-563 contacts ATP. Residues 883–954 are a coiled coil; it reads AGFINKEAEL…QTQYQAIENL (72 aa).

The protein belongs to the class-I aminoacyl-tRNA synthetase family. ValS type 1 subfamily. Monomer.

The protein localises to the cytoplasm. The catalysed reaction is tRNA(Val) + L-valine + ATP = L-valyl-tRNA(Val) + AMP + diphosphate. Functionally, catalyzes the attachment of valine to tRNA(Val). As ValRS can inadvertently accommodate and process structurally similar amino acids such as threonine, to avoid such errors, it has a 'posttransfer' editing activity that hydrolyzes mischarged Thr-tRNA(Val) in a tRNA-dependent manner. This chain is Valine--tRNA ligase, found in Actinobacillus pleuropneumoniae serotype 5b (strain L20).